A 235-amino-acid chain; its full sequence is uncharacterized protein (235 aa).

Residues 27-47 (AMKLWSTWITLLILTFFCSEC) form a helical membrane-spanning segment. The CX domain maps to 124 to 185 (YFWGESKYVP…CCGYDCCSNS (62 aa)). Residues 187–207 (IFTSIFSLLVILLIVSVLSIF) form a helical membrane-spanning segment.

It is found in the membrane. This is an uncharacterized protein from Caenorhabditis elegans.